A 116-amino-acid chain; its full sequence is Large ribosomal subunit protein uL24 (116 aa).

It belongs to the universal ribosomal protein uL24 family. As to quaternary structure, part of the 50S ribosomal subunit.

In terms of biological role, one of two assembly initiator proteins, it binds directly to the 5'-end of the 23S rRNA, where it nucleates assembly of the 50S subunit. Its function is as follows. Located at the polypeptide exit tunnel on the outside of the subunit. This chain is Large ribosomal subunit protein uL24, found in Methanosarcina barkeri (strain Fusaro / DSM 804).